The following is a 510-amino-acid chain: ATP synthase subunit alpha (510 aa).

169–176 (GDRQTGKT) lines the ATP pocket.

It belongs to the ATPase alpha/beta chains family. F-type ATPases have 2 components, CF(1) - the catalytic core - and CF(0) - the membrane proton channel. CF(1) has five subunits: alpha(3), beta(3), gamma(1), delta(1), epsilon(1). CF(0) has four main subunits: a(1), b(1), b'(1) and c(9-12).

Its subcellular location is the cell inner membrane. The catalysed reaction is ATP + H2O + 4 H(+)(in) = ADP + phosphate + 5 H(+)(out). Functionally, produces ATP from ADP in the presence of a proton gradient across the membrane. The alpha chain is a regulatory subunit. The polypeptide is ATP synthase subunit alpha (Rhodopseudomonas palustris (strain BisB18)).